The sequence spans 373 residues: 3 beta-hydroxysteroid dehydrogenase/Delta 5--&gt;4-isomerase (373 aa).

The active-site Proton acceptor is tyrosine 155. Residue lysine 159 coordinates NAD(+). A helical transmembrane segment spans residues 288–308 (ISLQYWLAFLLEIVSFLLSPI).

It belongs to the 3-beta-HSD family.

The protein localises to the endoplasmic reticulum membrane. It localises to the mitochondrion membrane. The catalysed reaction is a 3beta-hydroxy-Delta(5)-steroid + NAD(+) = a 3-oxo-Delta(5)-steroid + NADH + H(+). It catalyses the reaction a 3-oxo-Delta(5)-steroid = a 3-oxo-Delta(4)-steroid. It functions in the pathway lipid metabolism; steroid biosynthesis. In terms of biological role, 3-beta-HSD is a bifunctional enzyme, that catalyzes the oxidative conversion of Delta(5)-ene-3-beta-hydroxy steroid, and the oxidative conversion of ketosteroids. The 3-beta-HSD enzymatic system plays a crucial role in the biosynthesis of all classes of hormonal steroids. The sequence is that of 3 beta-hydroxysteroid dehydrogenase/Delta 5--&gt;4-isomerase (HSD3B) from Bos taurus (Bovine).